The primary structure comprises 228 residues: Carbonic anhydrase (228 aa).

Zn(2+) is bound by residues Cys56, Asp58, His112, and Cys115.

The protein belongs to the beta-class carbonic anhydrase family. Zn(2+) is required as a cofactor.

The enzyme catalyses hydrogencarbonate + H(+) = CO2 + H2O. In terms of biological role, catalyzes the reversible hydration of CO(2) to H(2)CO(3). The main role may be to provide inorganic carbon for the bicarbonate-dependent carboxylation reactions catalyzed by pyruvate carboxylase, acetyl-CoA carboxylase and carbamoyl-phosphate synthetase. Involved in osmoadaptation. This chain is Carbonic anhydrase, found in Emericella nidulans (strain FGSC A4 / ATCC 38163 / CBS 112.46 / NRRL 194 / M139) (Aspergillus nidulans).